The sequence spans 420 residues: ATP phosphoribosyltransferase regulatory subunit (420 aa).

This sequence belongs to the class-II aminoacyl-tRNA synthetase family. HisZ subfamily. In terms of assembly, heteromultimer composed of HisG and HisZ subunits.

Its subcellular location is the cytoplasm. Its pathway is amino-acid biosynthesis; L-histidine biosynthesis; L-histidine from 5-phospho-alpha-D-ribose 1-diphosphate: step 1/9. Its function is as follows. Required for the first step of histidine biosynthesis. May allow the feedback regulation of ATP phosphoribosyltransferase activity by histidine. The chain is ATP phosphoribosyltransferase regulatory subunit from Bacillus cereus (strain B4264).